The chain runs to 353 residues: MAANTPHDPSSPGHVPVMRQRMVELVGIGVTAGSAPAQPIIVDGTLGAGGHTEAFLEAYPNAIVIGLDRDPNALAEARARLERFGQRFFSYQTRFDGIGEALEHFSEDPDFPVDIREQGISGFLFDLGVSSMQLDQEDRGFAYRVDAPLDMRMDPSSRLTAAEILNTYEHGELARILKRYGDEKFAGKIASAVIREREKQPFENSARLVDLLYATIPAAARRTGGHPAKRTFQALRIEVNAELESLELVIPAAFSWLRVDGAGVFMSYQSLEDKIVKQQLKGMTESSTPPGLPVELPGTEPEFELLTRGAEKASEQEIAENSRSAPVRVRAARRIGAHASGAGGPRYPLVSTH.

Residues 49–51 (GGH), Asp-68, Phe-95, Asp-126, and Gln-133 contribute to the S-adenosyl-L-methionine site.

This sequence belongs to the methyltransferase superfamily. RsmH family.

It localises to the cytoplasm. It catalyses the reaction cytidine(1402) in 16S rRNA + S-adenosyl-L-methionine = N(4)-methylcytidine(1402) in 16S rRNA + S-adenosyl-L-homocysteine + H(+). Its function is as follows. Specifically methylates the N4 position of cytidine in position 1402 (C1402) of 16S rRNA. The sequence is that of Ribosomal RNA small subunit methyltransferase H from Corynebacterium urealyticum (strain ATCC 43042 / DSM 7109).